A 213-amino-acid polypeptide reads, in one-letter code: Adenylate kinase (213 aa).

10 to 15 (GAGKGT) lines the ATP pocket. Positions 30–59 (AVGDIFRTIIKTSTSEAELINNYVKQGALI) are NMP. Residues Arg-36, 57-59 (ALI), 85-88 (GYPR), and Gln-92 each bind AMP. Residues 123-161 (GRYSCKNCGKIYNIHFLQPKIEHVCDVCSSSVFDYRKDD) form an LID region. Arg-124 serves as a coordination point for ATP. Zn(2+) is bound by residues Cys-127 and Cys-130. 133–134 (IY) serves as a coordination point for ATP. Residues Cys-147 and Cys-150 each coordinate Zn(2+). AMP contacts are provided by Arg-158 and Arg-169. Residue Lys-197 participates in ATP binding.

This sequence belongs to the adenylate kinase family. As to quaternary structure, monomer.

It is found in the cytoplasm. The enzyme catalyses AMP + ATP = 2 ADP. It participates in purine metabolism; AMP biosynthesis via salvage pathway; AMP from ADP: step 1/1. Its function is as follows. Catalyzes the reversible transfer of the terminal phosphate group between ATP and AMP. Plays an important role in cellular energy homeostasis and in adenine nucleotide metabolism. In Rickettsia prowazekii (strain Madrid E), this protein is Adenylate kinase.